A 316-amino-acid polypeptide reads, in one-letter code: uncharacterized protein (316 aa).

The protein belongs to the chlamydial CPn_0441/CT_007/TC_0275 family.

This is an uncharacterized protein from Chlamydia pneumoniae (Chlamydophila pneumoniae).